The following is a 455-amino-acid chain: Bifunctional protein GlmU (455 aa).

Residues 1–225 (MNIVILAAGM…EWETLGVNSK (225 aa)) are pyrophosphorylase. UDP-N-acetyl-alpha-D-glucosamine-binding positions include 6–9 (LAAG), Lys-20, Gln-71, 76–77 (GT), 98–100 (YGD), Gly-135, Glu-150, Asn-165, and Asn-223. Residue Asp-100 participates in Mg(2+) binding. Mg(2+) is bound at residue Asn-223. Residues 226–246 (VQLAELERIHQRNLAQQLLED) form a linker region. The tract at residues 247–455 (GVTLIDPARI…QRPVKQKKEG (209 aa)) is N-acetyltransferase. Residues Arg-329 and Lys-347 each coordinate UDP-N-acetyl-alpha-D-glucosamine. His-359 serves as the catalytic Proton acceptor. UDP-N-acetyl-alpha-D-glucosamine-binding residues include Tyr-362 and Asn-373. Residues Ala-376, 382 to 383 (NY), Ser-401, Ala-419, and Arg-436 each bind acetyl-CoA.

It in the N-terminal section; belongs to the N-acetylglucosamine-1-phosphate uridyltransferase family. This sequence in the C-terminal section; belongs to the transferase hexapeptide repeat family. In terms of assembly, homotrimer. Mg(2+) serves as cofactor.

The protein localises to the cytoplasm. The catalysed reaction is alpha-D-glucosamine 1-phosphate + acetyl-CoA = N-acetyl-alpha-D-glucosamine 1-phosphate + CoA + H(+). It catalyses the reaction N-acetyl-alpha-D-glucosamine 1-phosphate + UTP + H(+) = UDP-N-acetyl-alpha-D-glucosamine + diphosphate. The protein operates within nucleotide-sugar biosynthesis; UDP-N-acetyl-alpha-D-glucosamine biosynthesis; N-acetyl-alpha-D-glucosamine 1-phosphate from alpha-D-glucosamine 6-phosphate (route II): step 2/2. It functions in the pathway nucleotide-sugar biosynthesis; UDP-N-acetyl-alpha-D-glucosamine biosynthesis; UDP-N-acetyl-alpha-D-glucosamine from N-acetyl-alpha-D-glucosamine 1-phosphate: step 1/1. It participates in bacterial outer membrane biogenesis; LPS lipid A biosynthesis. In terms of biological role, catalyzes the last two sequential reactions in the de novo biosynthetic pathway for UDP-N-acetylglucosamine (UDP-GlcNAc). The C-terminal domain catalyzes the transfer of acetyl group from acetyl coenzyme A to glucosamine-1-phosphate (GlcN-1-P) to produce N-acetylglucosamine-1-phosphate (GlcNAc-1-P), which is converted into UDP-GlcNAc by the transfer of uridine 5-monophosphate (from uridine 5-triphosphate), a reaction catalyzed by the N-terminal domain. This chain is Bifunctional protein GlmU, found in Ralstonia pickettii (strain 12J).